Reading from the N-terminus, the 199-residue chain is Mediator of RNA polymerase II transcription subunit 10 (199 aa).

It belongs to the Mediator complex subunit 10 family. Component of the Mediator complex.

The protein resides in the nucleus. Its function is as follows. Component of the Mediator complex, a coactivator involved in the regulated transcription of nearly all RNA polymerase II-dependent genes. Mediator functions as a bridge to convey information from gene-specific regulatory proteins to the basal RNA polymerase II transcription machinery. Mediator is recruited to promoters by direct interactions with regulatory proteins and serves as a scaffold for the assembly of a functional preinitiation complex with RNA polymerase II and the general transcription factors. This Candida glabrata (strain ATCC 2001 / BCRC 20586 / JCM 3761 / NBRC 0622 / NRRL Y-65 / CBS 138) (Yeast) protein is Mediator of RNA polymerase II transcription subunit 10 (NUT2).